The chain runs to 140 residues: ATP synthase epsilon chain (140 aa).

This sequence belongs to the ATPase epsilon chain family. F-type ATPases have 2 components, CF(1) - the catalytic core - and CF(0) - the membrane proton channel. CF(1) has five subunits: alpha(3), beta(3), gamma(1), delta(1), epsilon(1). CF(0) has three main subunits: a, b and c.

Its subcellular location is the cell inner membrane. Its function is as follows. Produces ATP from ADP in the presence of a proton gradient across the membrane. This Nitrosomonas eutropha (strain DSM 101675 / C91 / Nm57) protein is ATP synthase epsilon chain.